The chain runs to 475 residues: Vasculin-like protein 1 (475 aa).

Ser-49 and Ser-76 each carry phosphoserine. 2 disordered regions span residues 92-115 and 160-191; these read NLSGWHGSSRGHDGMSQRAGGSTG and PSLNPEAGKQNQPCRPIGTPSGVWENPPSAKQ. At Ser-202 the chain carries Phosphoserine. Disordered stretches follow at residues 237-271 and 292-318; these read LVPKPAPPPSKPNAWKANRMEHKPGSLSSSREAAL and PKESPSSTTPPIEISSSRLTKLTRRTT. Positions 294–311 are enriched in low complexity; the sequence is ESPSSTTPPIEISSSRLT. A Phosphothreonine modification is found at Thr-300. Phosphoserine is present on Ser-383. The tract at residues 456 to 475 is disordered; the sequence is CEDSDTETSSSETSDDDAWK.

The protein belongs to the vasculin family.

The protein localises to the nucleus. Functionally, possible transcription factor. In Rattus norvegicus (Rat), this protein is Vasculin-like protein 1 (Gpbp1l1).